A 64-amino-acid polypeptide reads, in one-letter code: DNA-directed RNA polymerase subunit Rpo10 (64 aa).

4 residues coordinate Zn(2+): Cys7, Cys10, Cys45, and Cys46.

The protein belongs to the archaeal Rpo10/eukaryotic RPB10 RNA polymerase subunit family. Part of the RNA polymerase complex. It depends on Zn(2+) as a cofactor.

It is found in the cytoplasm. The catalysed reaction is RNA(n) + a ribonucleoside 5'-triphosphate = RNA(n+1) + diphosphate. DNA-dependent RNA polymerase (RNAP) catalyzes the transcription of DNA into RNA using the four ribonucleoside triphosphates as substrates. This is DNA-directed RNA polymerase subunit Rpo10 from Natronomonas pharaonis (strain ATCC 35678 / DSM 2160 / CIP 103997 / JCM 8858 / NBRC 14720 / NCIMB 2260 / Gabara) (Halobacterium pharaonis).